A 638-amino-acid chain; its full sequence is MAFRKSNVYLSLVNSYIIDSPQPSSINYWWNMGSLLGLCLVIQIVTGIFMAMHYSSNIELAFSSVEHIMRDVHNGYILRYLHANGASFFFMVMFMHMAKGLYYGSYRSPRVTLWNVGVIIFILTIATAFLGYCCVYGQMSHWGATVITNLFSAIPFVGNDIVSWLWGGFSVSNPTIQRFFALHYLVPFIIAAMVIMHLMALHIHGSSNPLGITGNLDRIPMHSYFIFKDLVTVFLFMLILALFVFYSPNTLGQNMALLLITYVINILCAVCWKSLFIKYQWKIYNKTTYYFIIQNILNTKQLNNFVLKFNWTKQYNKMNIVSDLFNPNRVKYYYKEDNQQVTNMNSSNTHLTSNKKNLLVDTSETTRTTKNKFNYLLNIFNMKKMNQIITKRHYSIYKDSNIRFNQWLAGLIDGDGYFCITKNKYASCEITVELKDEKMLRQIQDKFGGSVKLRSGVKAIRYRLQNKEGMIKLINAVNGNIRNSKRLVQFNKVCILLNIDFKEPIKLTKDNAWFMGFFDADGTINYYYSGKLKIRPQLTISVTNKYLHDVEYYREVFGGNIYFDKAKNGYFKWSINNKELHNIFYTYNKSCPSKSNKGKRLFLIDKFYYLYDLLAFKAPHNTALYKAWLKFNEKWNNN.

The interval 1-253 is COB exons 1 to 4 encoded; it reads MAFRKSNVYL…VFYSPNTLGQ (253 aa). A COB intron 4 encoded region spans residues 253 to 638; sequence QNMALLLITY…LKFNEKWNNN (386 aa).

This sequence in the C-terminal section; belongs to the LAGLIDADG endonuclease family. Forms a ternary complex with intron derived RNA and the imported mitochondrial leucyl-tRNA synthetase NAM2. The proteins do not interact directly with each other. Post-translationally, the mature protein may arise from proteolytic cleavage of an in-frame translation of COB exons 1 to 4 plus intron 4, containing the bI4 open reading frame. Cleavage would take place close to the Met-385 resulting in an active maturase of about 30 kDa.

Its subcellular location is the mitochondrion. Its function is as follows. Mitochondrial mRNA maturase required for splicing of intron 4 of the cytochrome b (COB) gene, containing its own coding sequence, and intron 4 in COX1, coding for the related homing endonuclease aI4. In vivo splicing requires in addition the imported mitochondrial leucyl-tRNA synthetase NAM2. Both proteins seem to stimulate the intrinsic ribozyme activity of intron bI4 through binding to and stabilizing specific secondary and tertiary structure elements in the RNA. The protein is Intron-encoded RNA maturase bI4 (BI4) of Saccharomyces cerevisiae (strain ATCC 204508 / S288c) (Baker's yeast).